The following is a 332-amino-acid chain: ADP-L-glycero-D-manno-heptose-6-epimerase (332 aa).

NADP(+) is bound by residues 13–14, 34–35, Lys-41, Lys-56, 78–82, and Asn-95; these read FI, DN, and EGACS. Tyr-142 functions as the Proton acceptor in the catalytic mechanism. Lys-146 lines the NADP(+) pocket. Substrate is bound at residue Asn-171. Val-172 and Lys-180 together coordinate NADP(+). The active-site Proton acceptor is the Lys-180. Substrate is bound by residues Arg-182, His-189, 203–206, Arg-216, and Tyr-295; that span reads FEGC.

It belongs to the NAD(P)-dependent epimerase/dehydratase family. HldD subfamily. In terms of assembly, homopentamer. Requires NADP(+) as cofactor.

The enzyme catalyses ADP-D-glycero-beta-D-manno-heptose = ADP-L-glycero-beta-D-manno-heptose. It participates in nucleotide-sugar biosynthesis; ADP-L-glycero-beta-D-manno-heptose biosynthesis; ADP-L-glycero-beta-D-manno-heptose from D-glycero-beta-D-manno-heptose 7-phosphate: step 4/4. Its function is as follows. Catalyzes the interconversion between ADP-D-glycero-beta-D-manno-heptose and ADP-L-glycero-beta-D-manno-heptose via an epimerization at carbon 6 of the heptose. The protein is ADP-L-glycero-D-manno-heptose-6-epimerase of Thiobacillus denitrificans (strain ATCC 25259 / T1).